The sequence spans 558 residues: Ankyrin repeat protein OPG189 (558 aa).

ANK repeat units lie at residues Tyr65 to Lys95, Tyr169 to Lys205, His209 to Ser239, Asn243 to Thr272, Phe276 to Ile304, Tyr339 to Thr368, and Ser372 to Ile401.

The protein belongs to the orthopoxvirus OPG189 protein family.

In terms of biological role, contributes to viral release without involving rearrangement of host actin. The polypeptide is Ankyrin repeat protein OPG189 (OPG189) (Homo sapiens (Human)).